A 99-amino-acid chain; its full sequence is Sperm protein associated with the nucleus on the X chromosome N4 (99 aa).

Residues 1–10 are compositionally biased toward polar residues; sequence MEEPTSSTNE. Residues 1–99 form a disordered region; the sequence is MEEPTSSTNE…AGSPQDGGQN (99 aa). Over residues 11–22 the composition is skewed to basic and acidic residues; it reads NKMKSPCESNKR. Residues 23–32 show a composition bias toward basic residues; that stretch reads KVDKKKKNLH. The span at 64–78 shows a compositional bias: polar residues; that stretch reads SNQLENNQPTESSTD.

This sequence belongs to the SPAN-X family.

This Homo sapiens (Human) protein is Sperm protein associated with the nucleus on the X chromosome N4 (SPANXN4).